The primary structure comprises 384 residues: MAKHLFTSESVSEGHPDKIADQISDAVLDAILEQDPKARVACETYVKTGMVLVGGEVTTNAWVDIEEITRRTIREIGYVHSDMGFDANSCAVLSAIGKQSPDINQGVDRENPLEQGAGDQGLMFGYATNETSVLMPAPITYAHRLVERQAEVRKNGALPWLRPDAKSQVTFQYDDGKIVGIDAVVLSTQHSEDINQKDLHEAVMEEIIKPVLPAEWITAHTKYFINPTGRFVIGGPMGDCGLTGRKIIVDTYGGMARHGGGAFSGKDPSKVDRSAAYAARYVAKNIVAAGLADRCEIQVSYAIGVAEPTSIMVEAFGTEKIPADQLTLLVREFFDLRPYGLIKMLDLLHPIYRETAAYGHFGREHFPWEKTDKAALLRDAAGLK.

Histidine 15 provides a ligand contact to ATP. Aspartate 17 is a Mg(2+) binding site. Position 43 (glutamate 43) interacts with K(+). Residues glutamate 56 and glutamine 99 each coordinate L-methionine. The interval 99-109 (QSPDINQGVDR) is flexible loop. ATP is bound by residues 164–166 (DAK), 230–231 (RF), aspartate 239, 245–246 (RK), alanine 262, and lysine 266. Aspartate 239 contributes to the L-methionine binding site. L-methionine is bound at residue lysine 270.

The protein belongs to the AdoMet synthase family. In terms of assembly, homotetramer; dimer of dimers. It depends on Mg(2+) as a cofactor. K(+) serves as cofactor.

It is found in the cytoplasm. It carries out the reaction L-methionine + ATP + H2O = S-adenosyl-L-methionine + phosphate + diphosphate. The protein operates within amino-acid biosynthesis; S-adenosyl-L-methionine biosynthesis; S-adenosyl-L-methionine from L-methionine: step 1/1. Catalyzes the formation of S-adenosylmethionine (AdoMet) from methionine and ATP. The overall synthetic reaction is composed of two sequential steps, AdoMet formation and the subsequent tripolyphosphate hydrolysis which occurs prior to release of AdoMet from the enzyme. This Yersinia pseudotuberculosis serotype IB (strain PB1/+) protein is S-adenosylmethionine synthase.